A 576-amino-acid chain; its full sequence is Arginine--tRNA ligase (576 aa).

The short motif at 122 to 132 (PNVAKEMHVGH) is the 'HIGH' region element.

The protein belongs to the class-I aminoacyl-tRNA synthetase family. As to quaternary structure, monomer.

It localises to the cytoplasm. The catalysed reaction is tRNA(Arg) + L-arginine + ATP = L-arginyl-tRNA(Arg) + AMP + diphosphate. In Photobacterium profundum (strain SS9), this protein is Arginine--tRNA ligase.